The sequence spans 307 residues: Transcription factor MYB78 (307 aa).

HTH myb-type domains are found at residues 23–79 and 80–130; these read EMDV…RPDV and RRGN…QKHA. 2 DNA-binding regions (H-T-H motif) span residues 51–75 and 103–126; these read WNSLARCAELKRTGKSCRLRWLNYL and WSKIAQYLPGRTDNEIKNYWRTRV.

It localises to the nucleus. This is Transcription factor MYB78 from Arabidopsis thaliana (Mouse-ear cress).